The chain runs to 118 residues: Large ribosomal subunit protein uL18 (118 aa).

This sequence belongs to the universal ribosomal protein uL18 family. In terms of assembly, part of the 50S ribosomal subunit; part of the 5S rRNA/L5/L18/L25 subcomplex. Contacts the 5S and 23S rRNAs.

In terms of biological role, this is one of the proteins that bind and probably mediate the attachment of the 5S RNA into the large ribosomal subunit, where it forms part of the central protuberance. This is Large ribosomal subunit protein uL18 from Caulobacter sp. (strain K31).